The primary structure comprises 489 residues: Coronin-1B (489 aa).

Phosphoserine; by PKC is present on Ser2. 6 WD repeats span residues 18–72 (QPVK…GRID), 73–122 (KAYP…SPLT), 123–166 (EPVV…GTAE), 167–210 (ELYR…RGTL), 211–256 (VAER…ENLE), and 257–296 (EPMA…RYFE). The disordered stretch occupies residues 408–444 (RRNVLSDSRPAMAPGSSHLGAPASTTTAADATPSGSL). Residues 428 to 441 (APASTTTAADATPS) show a composition bias toward low complexity. Residues 449–474 (EAGKLEEVMQELRALRALVKEQGDRI) adopt a coiled-coil conformation.

The protein belongs to the WD repeat coronin family. Forms homooligomers, but does not form complexes with the other coronins. Interacts with Arp2/3 complex components, including ACTR2, ARPC1B and ARPC2. Binds actin. Phosphorylation by PKC on Ser-2 regulates the interaction with the Arp2/3 complex and cell motility in fibroblasts. Phosphorylation does not seem to affect subcellular location.

It localises to the cytoplasm. The protein localises to the cytoskeleton. The protein resides in the stress fiber. Regulates leading edge dynamics and cell motility in fibroblasts. May be involved in cytokinesis and signal transduction. The protein is Coronin-1B (CORO1B) of Homo sapiens (Human).